Consider the following 346-residue polypeptide: uncharacterized protein (346 aa).

A disordered region spans residues 10–109 (WDFIMTDPSS…SNSNGNNSPV (100 aa)). Residues 26-44 (KGSSKNGSPKTSSPKSGSP) are compositionally biased toward low complexity. Residues 56–67 (NQQLLQNDSINL) show a composition bias toward polar residues. Over residues 94 to 109 (KSSVVPSNSNGNNSPV) the composition is skewed to low complexity.

This is an uncharacterized protein from Dictyostelium discoideum (Social amoeba).